We begin with the raw amino-acid sequence, 123 residues long: ATP synthase epsilon chain (123 aa).

Belongs to the ATPase epsilon chain family. As to quaternary structure, F-type ATPases have 2 components, CF(1) - the catalytic core - and CF(0) - the membrane proton channel. CF(1) has five subunits: alpha(3), beta(3), gamma(1), delta(1), epsilon(1). CF(0) has three main subunits: a, b and c.

It localises to the cell inner membrane. In terms of biological role, produces ATP from ADP in the presence of a proton gradient across the membrane. The chain is ATP synthase epsilon chain from Helicobacter acinonychis (strain Sheeba).